The following is a 79-amino-acid chain: Cell division protein ZapB (79 aa).

A coiled-coil region spans residues 1–78 (MSLEALDQLQ…LNSLLGKMDD (78 aa)).

The protein belongs to the ZapB family. As to quaternary structure, homodimer. The ends of the coiled-coil dimer bind to each other, forming polymers. Interacts with FtsZ.

Its subcellular location is the cytoplasm. Non-essential, abundant cell division factor that is required for proper Z-ring formation. It is recruited early to the divisome by direct interaction with FtsZ, stimulating Z-ring assembly and thereby promoting cell division earlier in the cell cycle. Its recruitment to the Z-ring requires functional FtsA or ZipA. The chain is Cell division protein ZapB from Hamiltonella defensa subsp. Acyrthosiphon pisum (strain 5AT).